The sequence spans 227 residues: ATP-dependent dethiobiotin synthetase BioD (227 aa).

Asp12–Val17 serves as a coordination point for ATP. Thr16 contacts Mg(2+). Lys37 is a catalytic residue. Position 41 (Thr41) interacts with substrate. ATP contacts are provided by residues Asp50, Glu110 to Gly113, Gly171 to Ser172, and Pro201 to Gly203. Mg(2+) contacts are provided by Asp50 and Glu110.

It belongs to the dethiobiotin synthetase family. In terms of assembly, homodimer. The cofactor is Mg(2+).

The protein resides in the cytoplasm. The catalysed reaction is (7R,8S)-7,8-diammoniononanoate + CO2 + ATP = (4R,5S)-dethiobiotin + ADP + phosphate + 3 H(+). Its pathway is cofactor biosynthesis; biotin biosynthesis; biotin from 7,8-diaminononanoate: step 1/2. Catalyzes a mechanistically unusual reaction, the ATP-dependent insertion of CO2 between the N7 and N8 nitrogen atoms of 7,8-diaminopelargonic acid (DAPA, also called 7,8-diammoniononanoate) to form a ureido ring. This chain is ATP-dependent dethiobiotin synthetase BioD, found in Rhodococcus erythropolis (strain PR4 / NBRC 100887).